Consider the following 423-residue polypeptide: Histidine--tRNA ligase (423 aa).

The protein belongs to the class-II aminoacyl-tRNA synthetase family. As to quaternary structure, homodimer.

The protein localises to the cytoplasm. The catalysed reaction is tRNA(His) + L-histidine + ATP = L-histidyl-tRNA(His) + AMP + diphosphate + H(+). The protein is Histidine--tRNA ligase of Anoxybacillus flavithermus (strain DSM 21510 / WK1).